Here is a 215-residue protein sequence, read N- to C-terminus: Nascent polypeptide-associated complex subunit alpha (215 aa).

The interval 1–82 (MPGEATETVP…EKKARKAMSK (82 aa)) is disordered. The segment covering 9–28 (VPVTEQEMQQPQAETGSGTE) has biased composition (polar residues). Acidic residues predominate over residues 29–42 (SDSDESVPDLEEGD). The span at 44 to 57 (AQTQTQQAQLAAAA) shows a compositional bias: low complexity. An NAC-A/B domain is found at 70–135 (SRSEKKARKA…AKIEDLSQQA (66 aa)). Position 166 is a phosphoserine (Ser166). The region spanning 176–213 (VEVKDIELVMSQANVSRAKAVRALKNNNNDIVNAIMEL) is the UBA domain.

It belongs to the NAC-alpha family.

May promote appropriate targeting of ribosome-nascent polypeptide complexes. The polypeptide is Nascent polypeptide-associated complex subunit alpha (naca) (Danio rerio (Zebrafish)).